The chain runs to 682 residues: DNA-directed RNA polymerase subunit beta' (682 aa).

Zn(2+) is bound by residues C69, C71, C87, and C90. Mg(2+)-binding residues include D489, D491, and D493.

Belongs to the RNA polymerase beta' chain family. RpoC1 subfamily. In plastids the minimal PEP RNA polymerase catalytic core is composed of four subunits: alpha, beta, beta', and beta''. When a (nuclear-encoded) sigma factor is associated with the core the holoenzyme is formed, which can initiate transcription. Mg(2+) is required as a cofactor. Zn(2+) serves as cofactor.

The protein localises to the plastid. It is found in the chloroplast. It catalyses the reaction RNA(n) + a ribonucleoside 5'-triphosphate = RNA(n+1) + diphosphate. Functionally, DNA-dependent RNA polymerase catalyzes the transcription of DNA into RNA using the four ribonucleoside triphosphates as substrates. The protein is DNA-directed RNA polymerase subunit beta' of Brachypodium distachyon (Purple false brome).